The following is a 343-amino-acid chain: S-adenosylmethionine:tRNA ribosyltransferase-isomerase (343 aa).

This sequence belongs to the QueA family. As to quaternary structure, monomer.

The protein localises to the cytoplasm. The catalysed reaction is 7-aminomethyl-7-carbaguanosine(34) in tRNA + S-adenosyl-L-methionine = epoxyqueuosine(34) in tRNA + adenine + L-methionine + 2 H(+). It participates in tRNA modification; tRNA-queuosine biosynthesis. Its function is as follows. Transfers and isomerizes the ribose moiety from AdoMet to the 7-aminomethyl group of 7-deazaguanine (preQ1-tRNA) to give epoxyqueuosine (oQ-tRNA). The sequence is that of S-adenosylmethionine:tRNA ribosyltransferase-isomerase from Coxiella burnetii (strain RSA 331 / Henzerling II).